A 471-amino-acid chain; its full sequence is Ribulose bisphosphate carboxylase large chain (471 aa).

A propeptide spanning residues 1 to 2 is cleaved from the precursor; that stretch reads MS. Residue P3 is modified to N-acetylproline. K14 carries the N6,N6,N6-trimethyllysine modification. Residues N123 and T173 each coordinate substrate. The active-site Proton acceptor is the K175. K177 serves as a coordination point for substrate. K201, D203, and E204 together coordinate Mg(2+). N6-carboxylysine is present on K201. Catalysis depends on H294, which acts as the Proton acceptor. Residues R295, H327, and S379 each coordinate substrate.

The protein belongs to the RuBisCO large chain family. Type I subfamily. In terms of assembly, heterohexadecamer of 8 large chains and 8 small chains; disulfide-linked. The disulfide link is formed within the large subunit homodimers. It depends on Mg(2+) as a cofactor. Post-translationally, the disulfide bond which can form in the large chain dimeric partners within the hexadecamer appears to be associated with oxidative stress and protein turnover.

Its subcellular location is the plastid. It is found in the chloroplast. It catalyses the reaction 2 (2R)-3-phosphoglycerate + 2 H(+) = D-ribulose 1,5-bisphosphate + CO2 + H2O. It carries out the reaction D-ribulose 1,5-bisphosphate + O2 = 2-phosphoglycolate + (2R)-3-phosphoglycerate + 2 H(+). Its function is as follows. RuBisCO catalyzes two reactions: the carboxylation of D-ribulose 1,5-bisphosphate, the primary event in carbon dioxide fixation, as well as the oxidative fragmentation of the pentose substrate in the photorespiration process. Both reactions occur simultaneously and in competition at the same active site. The chain is Ribulose bisphosphate carboxylase large chain from Drymophloeus subdistichus (Palm tree).